Consider the following 101-residue polypeptide: Small ribosomal subunit protein uS14 (101 aa).

Belongs to the universal ribosomal protein uS14 family. In terms of assembly, part of the 30S ribosomal subunit. Contacts proteins S3 and S10.

Functionally, binds 16S rRNA, required for the assembly of 30S particles and may also be responsible for determining the conformation of the 16S rRNA at the A site. The protein is Small ribosomal subunit protein uS14 of Shewanella frigidimarina (strain NCIMB 400).